The chain runs to 22 residues: Short-chain-enoyl-CoA hydratase (22 aa).

The protein belongs to the enoyl-CoA hydratase/isomerase family.

The enzyme catalyses a short-chain (3S)-3-hydroxyacyl-CoA = a short-chain (2E)-enoyl-CoA + H2O. The protein operates within lipid metabolism; butanoate metabolism. In Clostridium pasteurianum, this protein is Short-chain-enoyl-CoA hydratase (crt).